The sequence spans 345 residues: S-adenosylmethionine:tRNA ribosyltransferase-isomerase (345 aa).

The protein belongs to the QueA family. Monomer.

Its subcellular location is the cytoplasm. It carries out the reaction 7-aminomethyl-7-carbaguanosine(34) in tRNA + S-adenosyl-L-methionine = epoxyqueuosine(34) in tRNA + adenine + L-methionine + 2 H(+). The protein operates within tRNA modification; tRNA-queuosine biosynthesis. In terms of biological role, transfers and isomerizes the ribose moiety from AdoMet to the 7-aminomethyl group of 7-deazaguanine (preQ1-tRNA) to give epoxyqueuosine (oQ-tRNA). This Helicobacter pylori (strain ATCC 700392 / 26695) (Campylobacter pylori) protein is S-adenosylmethionine:tRNA ribosyltransferase-isomerase.